The chain runs to 933 residues: Phospholipase D2 (933 aa).

Disordered regions lie at residues 1–20 and 134–160; these read MAAT…SSQL and SPAP…RRTA. Residues 65–195 form the PX domain; that stretch reads VIAQVVGTER…TEFLEVSQLS (131 aa). Residues 203-311 form the PH domain; it reads KGLEGVIRKR…WAQEITELAQ (109 aa). PLD phosphodiesterase domains are found at residues 437–464 and 751–778; these read TLWA…AYGR and ELIY…NDRS. Positions 441 to 788 are catalytic; that stretch reads HHEKLLVVDQ…LLGKRDSELA (348 aa).

Belongs to the phospholipase D family. Interacts with PIP5K1B. Interacts with EGFR. Phosphorylated by FGR.

Its subcellular location is the cell membrane. It catalyses the reaction a 1,2-diacyl-sn-glycero-3-phosphocholine + H2O = a 1,2-diacyl-sn-glycero-3-phosphate + choline + H(+). The catalysed reaction is 1,2-dihexadecanoyl-sn-glycero-3-phosphocholine + H2O = 1,2-dihexadecanoyl-sn-glycero-3-phosphate + choline + H(+). In terms of biological role, function as phospholipase selective for phosphatidylcholine. May have a role in signal-induced cytoskeletal regulation and/or endocytosis. The sequence is that of Phospholipase D2 (PLD2) from Bos taurus (Bovine).